The sequence spans 414 residues: TBC domain-containing protein C1778.09 (414 aa).

Positions 158–343 constitute a Rab-GAP TBC domain; that stretch reads GIPDCWRSIA…RIWDLLFLLG (186 aa).

Its subcellular location is the cytoplasm. The protein localises to the nucleus. This Schizosaccharomyces pombe (strain 972 / ATCC 24843) (Fission yeast) protein is TBC domain-containing protein C1778.09.